Here is a 319-residue protein sequence, read N- to C-terminus: Serpentine receptor class X-43 (319 aa).

7 consecutive transmembrane segments (helical) span residues 28–48 (VVSMECLTGLFLLVAVIIGCF), 67–87 (AQLMACINSGSFSTLGVLLNI), 95–115 (YLFGNFSIFLLPVILISFLLM), 138–158 (IRTFIVFNWLLSLVAGSYLVV), 164–184 (FVFYHFGWLFAGSVSVKCGTL), 194–214 (TVLSITIVGLDVVTLVALMAF), and 267–287 (FFFTTSFSSNLLHVFDPVVVF).

This sequence belongs to the G-protein coupled receptor 1 family. In terms of tissue distribution, expressed in ASI sensory neurons.

Its subcellular location is the cell membrane. The protein resides in the perikaryon. The protein localises to the cell projection. It is found in the cilium. Functionally, receptor for the ascaroside pheromone icas#9 which suppresses exploratory forgaging behavior. In response to ascaroside icas#9, may furthermore play a role in the expression of genes in the TGF-beta signaling pathway, such as daf-7, and in insulin signaling pathway, such as daf-28, which may in turn contribute to exploratory behavior. The protein is Serpentine receptor class X-43 of Caenorhabditis elegans.